Consider the following 131-residue polypeptide: Large ribosomal subunit protein bL21 (131 aa).

Basic and acidic residues predominate over residues 106 to 116 (TIDDMPKKEAA). The interval 106-131 (TIDDMPKKEAAPAKARRSTKKAAAAE) is disordered.

The protein belongs to the bacterial ribosomal protein bL21 family. Part of the 50S ribosomal subunit. Contacts protein L20.

In terms of biological role, this protein binds to 23S rRNA in the presence of protein L20. The chain is Large ribosomal subunit protein bL21 from Koribacter versatilis (strain Ellin345).